The chain runs to 127 residues: Fluoride-specific ion channel FluC (127 aa).

4 consecutive transmembrane segments (helical) span residues 4–24 (LDYL…YLVS), 39–59 (GTII…FAAI), 68–88 (AILF…TFTY), and 102–122 (VAYA…GMIL). Positions 78 and 81 each coordinate Na(+).

It belongs to the fluoride channel Fluc/FEX (TC 1.A.43) family.

It localises to the cell inner membrane. It carries out the reaction fluoride(in) = fluoride(out). With respect to regulation, na(+) is not transported, but it plays an essential structural role and its presence is essential for fluoride channel function. Its function is as follows. Fluoride-specific ion channel. Important for reducing fluoride concentration in the cell, thus reducing its toxicity. This is Fluoride-specific ion channel FluC from Thermotoga petrophila (strain ATCC BAA-488 / DSM 13995 / JCM 10881 / RKU-1).